We begin with the raw amino-acid sequence, 241 residues long: Enolase-phosphatase E1 (241 aa).

Residues Asp9 and Glu11 each coordinate Mg(2+). Residues 133 to 134 and Lys172 each bind substrate; that span reads SS. Asp198 is a binding site for Mg(2+).

The protein belongs to the HAD-like hydrolase superfamily. MasA/MtnC family. In terms of assembly, monomer. Mg(2+) serves as cofactor.

Its subcellular location is the cytoplasm. It is found in the nucleus. It catalyses the reaction 5-methylsulfanyl-2,3-dioxopentyl phosphate + H2O = 1,2-dihydroxy-5-(methylsulfanyl)pent-1-en-3-one + phosphate. It participates in amino-acid biosynthesis; L-methionine biosynthesis via salvage pathway; L-methionine from S-methyl-5-thio-alpha-D-ribose 1-phosphate: step 3/6. Its pathway is amino-acid biosynthesis; L-methionine biosynthesis via salvage pathway; L-methionine from S-methyl-5-thio-alpha-D-ribose 1-phosphate: step 4/6. Functionally, bifunctional enzyme that catalyzes the enolization of 2,3-diketo-5-methylthiopentyl-1-phosphate (DK-MTP-1-P) into the intermediate 2-hydroxy-3-keto-5-methylthiopentenyl-1-phosphate (HK-MTPenyl-1-P), which is then dephosphorylated to form the acireductone 1,2-dihydroxy-3-keto-5-methylthiopentene (DHK-MTPene). The chain is Enolase-phosphatase E1 from Scheffersomyces stipitis (strain ATCC 58785 / CBS 6054 / NBRC 10063 / NRRL Y-11545) (Yeast).